We begin with the raw amino-acid sequence, 274 residues long: Putative ankyrin repeat protein R597 (274 aa).

4 ANK repeats span residues 78-112 (VGLP…NNND), 114-144 (PISE…SLKI), 146-174 (SRYH…DIQG), and 176-205 (NLSY…NIND).

In Acanthamoeba polyphaga mimivirus (APMV), this protein is Putative ankyrin repeat protein R597.